We begin with the raw amino-acid sequence, 85 residues long: BmK AGP-SYPU2 (85 aa).

A signal peptide spans 1-19 (MNYMVIISLALLVMTGVES). Residues 21-83 (KDGYIADDRN…ARIMKPGRCN (63 aa)) form the LCN-type CS-alpha/beta domain. 4 cysteine pairs are disulfide-bonded: Cys31-Cys82, Cys35-Cys55, Cys41-Cys65, and Cys45-Cys67.

It belongs to the long (4 C-C) scorpion toxin superfamily. Sodium channel inhibitor family. Alpha subfamily. As to expression, expressed by the venom gland.

The protein resides in the secreted. Alpha toxins bind voltage-independently at site-3 of sodium channels (Nav) and inhibit the inactivation of the activated channels, thereby blocking neuronal transmission. Shows analgesic activity when intraperitoneally injected into mice. This chain is BmK AGP-SYPU2, found in Olivierus martensii (Manchurian scorpion).